Here is a 123-residue protein sequence, read N- to C-terminus: WAP four-disulfide core domain protein 5 (123 aa).

A signal peptide spans 1–24; that stretch reads MRIQSLLLLGALLAVGSQLPAVFG. 2 consecutive WAP domains span residues 27-73 and 74-121; these read KGEK…CVPR and VSVK…RDPA. Disulfide bonds link cysteine 34-cysteine 62, cysteine 41-cysteine 66, cysteine 49-cysteine 61, cysteine 55-cysteine 70, cysteine 81-cysteine 109, cysteine 88-cysteine 113, cysteine 96-cysteine 108, and cysteine 102-cysteine 117.

The protein localises to the secreted. Functionally, putative acid-stable proteinase inhibitor. This Chlorocebus aethiops (Green monkey) protein is WAP four-disulfide core domain protein 5 (WFDC5).